The primary structure comprises 955 residues: Centrosomal protein of 112 kDa (955 aa).

The stretch at 277 to 954 (QKHDADVQKI…QEELTTYQGR (678 aa)) forms a coiled coil.

Its subcellular location is the cytoplasm. The protein localises to the cytoskeleton. It localises to the microtubule organizing center. It is found in the centrosome. The chain is Centrosomal protein of 112 kDa (CEP112) from Homo sapiens (Human).